The chain runs to 527 residues: Probable feruloyl esterase B (527 aa).

Positions methionine 1–serine 19 are cleaved as a signal peptide. Cystine bridges form between cysteine 31–cysteine 76 and cysteine 65–cysteine 115. N-linked (GlcNAc...) asparagine glycans are attached at residues asparagine 56, asparagine 86, and asparagine 139. Intrachain disulfides connect cysteine 188/cysteine 442, cysteine 257/cysteine 274, cysteine 283/cysteine 292, and cysteine 504/cysteine 526. Serine 189 acts as the Acyl-ester intermediate in catalysis. The Ca(2+) site is built by aspartate 258, aspartate 261, alanine 263, aspartate 265, and isoleucine 267. Asparagine 277 carries N-linked (GlcNAc...) asparagine glycosylation. Residues asparagine 312 and asparagine 356 are each glycosylated (N-linked (GlcNAc...) asparagine). Catalysis depends on charge relay system residues aspartate 401 and histidine 441.

This sequence belongs to the tannase family.

It is found in the secreted. It catalyses the reaction feruloyl-polysaccharide + H2O = ferulate + polysaccharide.. Its function is as follows. Involved in degradation of plant cell walls. Hydrolyzes the feruloyl-arabinose ester bond in arabinoxylans as well as the feruloyl-galactose and feruloyl-arabinose ester bonds in pectin. In Emericella nidulans (strain FGSC A4 / ATCC 38163 / CBS 112.46 / NRRL 194 / M139) (Aspergillus nidulans), this protein is Probable feruloyl esterase B (faeB).